Reading from the N-terminus, the 392-residue chain is MSMPTIRAVRALTVRGGGADYHDQDAGHWIDDHIATPMSRYPEYRQSRQSFGINVLGTLVIEVEASDGTVGFAVTTGGEIGAFIVERHLARFIEGQRVTDIEKMWDQMFHATLYYGRKGVVLNAISGVDLALWDLLAKVRREPVHQLLGGKVRDELEFYATGARPDLAKEMGFIGGKLPLHHGPAEGEAGLRRNLDALADMRSRVGADFWLMLDCWMSLDVPYATRLAHEAHALGLKWIEECLPPDDYWGYAKLRRDVPRGMLVTTGEHEATRWGFRMLLEMECCDIIQPDVGWCGGLTELIRISALADARGVLVIPHGSSVYSYHFVATRHNSPFAEFLMMAPQADRVVPMFDPLLLDEPVPVGGRMKVPDTPGFGVRLNPDVRMQRPYEH.

Substrate-binding residues include His22 and Arg48. Mg(2+)-binding residues include Asp214, Glu240, and Glu268. The Proton acceptor role is filled by His318. Glu338 is a binding site for substrate.

It belongs to the mandelate racemase/muconate lactonizing enzyme family. RhamD subfamily. In terms of assembly, homooctamer; tetramer of dimers. Requires Mg(2+) as cofactor.

The enzyme catalyses L-rhamnonate = 2-dehydro-3-deoxy-L-rhamnonate + H2O. Functionally, catalyzes the dehydration of L-rhamnonate to 2-keto-3-deoxy-L-rhamnonate (KDR). The chain is L-rhamnonate dehydratase from Burkholderia orbicola (strain MC0-3).